The chain runs to 321 residues: Arabinan endo-1,5-alpha-L-arabinosidase A (321 aa).

The signal sequence occupies residues 1 to 19; that stretch reads MYQLLSVASVPLLASLVHG. D34 acts as the Proton acceptor in catalysis. E200 (proton donor) is an active-site residue. N-linked (GlcNAc...) asparagine glycosylation occurs at N295.

This sequence belongs to the glycosyl hydrolase 43 family.

It catalyses the reaction Endohydrolysis of (1-&gt;5)-alpha-arabinofuranosidic linkages in (1-&gt;5)-arabinans.. Its pathway is glycan metabolism; L-arabinan degradation. Its function is as follows. Its preferred substrate is linear 1,5-alpha-L-arabinan. The enzyme activity is progressively reduced as 1,5-alpha-chains become shorter or more highly substituted. This is Arabinan endo-1,5-alpha-L-arabinosidase A (abnA) from Aspergillus niger.